The sequence spans 649 residues: Replication protein E1 (649 aa).

The Nuclear localization signal motif lies at 83–85 (KRK). 3 positions are modified to phosphoserine; by host: Ser-89, Ser-93, and Ser-107. The Nuclear export signal signature appears at 106 to 115 (ISPRLDAIKL). Positions 146–188 (TQVEKHGDPENGGDGQERDTGRDIEGEGVEHREAEAVDDSTRE) are disordered. Residues 148-188 (VEKHGDPENGGDGQERDTGRDIEGEGVEHREAEAVDDSTRE) show a composition bias toward basic and acidic residues. Residues 187-353 (REHADTSGIL…QTVIEHSLAD (167 aa)) form a DNA-binding region region. Residues 452–602 (IEFIPFLSKL…FPFDRNGNAV (151 aa)) enclose the SF3 helicase domain. Position 478-485 (478-485 (GPPDTGKS)) interacts with ATP. Lys-559 participates in a covalent cross-link: Glycyl lysine isopeptide (Lys-Gly) (interchain with G-Cter in SUMO).

It belongs to the papillomaviridae E1 protein family. Can form hexamers. Interacts with E2 protein; this interaction increases E1 DNA binding specificity. Interacts with host DNA polymerase subunit POLA2. Interacts with host single stranded DNA-binding protein RPA1. Interacts with host TOP1; this interaction stimulates the enzymatic activity of TOP1. In terms of processing, phosphorylated. Post-translationally, sumoylated.

The protein localises to the host nucleus. It carries out the reaction Couples ATP hydrolysis with the unwinding of duplex DNA by translocating in the 3'-5' direction.. It catalyses the reaction ATP + H2O = ADP + phosphate + H(+). Its function is as follows. ATP-dependent DNA 3'-5' helicase required for initiation of viral DNA replication. It forms a complex with the viral E2 protein. The E1-E2 complex binds to the replication origin which contains binding sites for both proteins. During the initial step, a dimer of E1 interacts with a dimer of protein E2 leading to a complex that binds the viral origin of replication with high specificity. Then, a second dimer of E1 displaces the E2 dimer in an ATP-dependent manner to form the E1 tetramer. Following this, two E1 monomers are added to each half of the site, which results in the formation of two E1 trimers on the viral ori. Subsequently, two hexamers will be created. The double hexamer acts as a bi-directional helicase machinery and unwinds the viral DNA and then recruits the host DNA polymerase to start replication. This chain is Replication protein E1, found in Human papillomavirus 11.